The chain runs to 318 residues: NADH-ubiquinone oxidoreductase chain 1 (318 aa).

A run of 8 helical transmembrane segments spans residues 2-22 (PMAN…FLML), 68-88 (ITLY…LWTP), 100-120 (LGLL…LWSG), 146-166 (LAII…STLI), 171-191 (HLWL…STLA), 231-251 (IIMM…DALS), 253-273 (ELYT…FLWI), and 294-314 (LPLT…ISSI).

The protein belongs to the complex I subunit 1 family. As to quaternary structure, core subunit of respiratory chain NADH dehydrogenase (Complex I) which is composed of 45 different subunits.

It is found in the mitochondrion inner membrane. The catalysed reaction is a ubiquinone + NADH + 5 H(+)(in) = a ubiquinol + NAD(+) + 4 H(+)(out). Its function is as follows. Core subunit of the mitochondrial membrane respiratory chain NADH dehydrogenase (Complex I) which catalyzes electron transfer from NADH through the respiratory chain, using ubiquinone as an electron acceptor. Essential for the catalytic activity and assembly of complex I. The chain is NADH-ubiquinone oxidoreductase chain 1 (MT-ND1) from Homo sapiens (Human).